The sequence spans 456 residues: Tyrosinase-like protein 2 (456 aa).

Positions 1 to 22 are cleaved as a signal peptide; that stretch reads MNTMALFGKVILLQFLIGVGFC. Cu cation-binding residues include H145, H154, H163, H295, H299, and H322.

Cu(2+) is required as a cofactor. Prismatic layer of shell (at protein level).

It is found in the secreted. The chain is Tyrosinase-like protein 2 from Margaritifera margaritifera (Freshwater pearl mussel).